The chain runs to 108 residues: UPF0102 protein WS0451 (108 aa).

It belongs to the UPF0102 family.

This Wolinella succinogenes (strain ATCC 29543 / DSM 1740 / CCUG 13145 / JCM 31913 / LMG 7466 / NCTC 11488 / FDC 602W) (Vibrio succinogenes) protein is UPF0102 protein WS0451.